Consider the following 358-residue polypeptide: tRNA-specific 2-thiouridylase MnmA (358 aa).

Residues 6 to 13 and leucine 32 contribute to the ATP site; that span reads AMSGGVDS. Cysteine 101 (nucleophile) is an active-site residue. A disulfide bridge links cysteine 101 with cysteine 193. Glycine 125 is an ATP binding site. The interaction with tRNA stretch occupies residues 143 to 145; that stretch reads KDQ. Catalysis depends on cysteine 193, which acts as the Cysteine persulfide intermediate.

Belongs to the MnmA/TRMU family.

The protein localises to the cytoplasm. It carries out the reaction S-sulfanyl-L-cysteinyl-[protein] + uridine(34) in tRNA + AH2 + ATP = 2-thiouridine(34) in tRNA + L-cysteinyl-[protein] + A + AMP + diphosphate + H(+). Catalyzes the 2-thiolation of uridine at the wobble position (U34) of tRNA, leading to the formation of s(2)U34. This Mycobacterium leprae (strain Br4923) protein is tRNA-specific 2-thiouridylase MnmA.